We begin with the raw amino-acid sequence, 517 residues long: 2,3-bisphosphoglycerate-independent phosphoglycerate mutase (517 aa).

Mn(2+) contacts are provided by D14 and S64. The active-site Phosphoserine intermediate is S64. Substrate is bound by residues H125, 155-156 (RD), R187, R193, 259-262 (RPDR), and K334. 5 residues coordinate Mn(2+): D401, H405, D442, H443, and H461.

Belongs to the BPG-independent phosphoglycerate mutase family. As to quaternary structure, monomer. Requires Mn(2+) as cofactor.

It catalyses the reaction (2R)-2-phosphoglycerate = (2R)-3-phosphoglycerate. It participates in carbohydrate degradation; glycolysis; pyruvate from D-glyceraldehyde 3-phosphate: step 3/5. Its function is as follows. Catalyzes the interconversion of 2-phosphoglycerate and 3-phosphoglycerate. This Symbiobacterium thermophilum (strain DSM 24528 / JCM 14929 / IAM 14863 / T) protein is 2,3-bisphosphoglycerate-independent phosphoglycerate mutase.